Reading from the N-terminus, the 69-residue chain is Large ribosomal subunit protein bL31 (69 aa).

Zn(2+)-binding residues include Cys-16, Cys-18, Cys-37, and Cys-40.

It belongs to the bacterial ribosomal protein bL31 family. Type A subfamily. Part of the 50S ribosomal subunit. Requires Zn(2+) as cofactor.

Its function is as follows. Binds the 23S rRNA. This chain is Large ribosomal subunit protein bL31, found in Buchnera aphidicola subsp. Baizongia pistaciae (strain Bp).